The sequence spans 172 residues: Protein GrpE (172 aa).

The protein belongs to the GrpE family. In terms of assembly, homodimer.

It localises to the cytoplasm. Participates actively in the response to hyperosmotic and heat shock by preventing the aggregation of stress-denatured proteins, in association with DnaK and GrpE. It is the nucleotide exchange factor for DnaK and may function as a thermosensor. Unfolded proteins bind initially to DnaJ; upon interaction with the DnaJ-bound protein, DnaK hydrolyzes its bound ATP, resulting in the formation of a stable complex. GrpE releases ADP from DnaK; ATP binding to DnaK triggers the release of the substrate protein, thus completing the reaction cycle. Several rounds of ATP-dependent interactions between DnaJ, DnaK and GrpE are required for fully efficient folding. This is Protein GrpE from Thermotoga sp. (strain RQ2).